The chain runs to 263 residues: 1-(5-phosphoribosyl)-5-[(5-phosphoribosylamino)methylideneamino] imidazole-4-carboxamide isomerase (263 aa).

This sequence belongs to the HisA/HisF family.

The protein resides in the cytoplasm. The catalysed reaction is 1-(5-phospho-beta-D-ribosyl)-5-[(5-phospho-beta-D-ribosylamino)methylideneamino]imidazole-4-carboxamide = 5-[(5-phospho-1-deoxy-D-ribulos-1-ylimino)methylamino]-1-(5-phospho-beta-D-ribosyl)imidazole-4-carboxamide. It functions in the pathway amino-acid biosynthesis; L-histidine biosynthesis; L-histidine from 5-phospho-alpha-D-ribose 1-diphosphate: step 4/9. The protein is 1-(5-phosphoribosyl)-5-[(5-phosphoribosylamino)methylideneamino] imidazole-4-carboxamide isomerase (HIS6) of Eremothecium gossypii (strain ATCC 10895 / CBS 109.51 / FGSC 9923 / NRRL Y-1056) (Yeast).